A 135-amino-acid polypeptide reads, in one-letter code: L-ectoine synthase (135 aa).

It belongs to the ectoine synthase family.

It carries out the reaction (2S)-4-acetamido-2-aminobutanoate = L-ectoine + H2O. It participates in amine and polyamine biosynthesis; ectoine biosynthesis; L-ectoine from L-aspartate 4-semialdehyde: step 3/3. Its function is as follows. Catalyzes the circularization of gamma-N-acetyl-alpha,gamma-diaminobutyric acid (ADABA) to ectoine (1,4,5,6-tetrahydro-2-methyl-4-pyrimidine carboxylic acid), which is an excellent osmoprotectant. In Hyphomonas neptunium (strain ATCC 15444), this protein is L-ectoine synthase.